The chain runs to 100 residues: Replication restart protein PriB (100 aa).

The SSB domain occupies 1-99; sequence MGFNNLVSLA…LRIQNIQEYK (99 aa).

It belongs to the PriB family. In terms of assembly, homodimer. Interacts with PriA and DnaT. Component of the replication restart primosome. Primosome assembly occurs via a 'hand-off' mechanism. PriA binds to replication forks, subsequently PriB then DnaT bind; DnaT then displaces ssDNA to generate the helicase loading substrate.

Involved in the restart of stalled replication forks, which reloads the replicative helicase on sites other than the origin of replication; the PriA-PriB pathway is the major replication restart pathway. During primosome assembly it facilitates complex formation between PriA and DnaT on DNA; stabilizes PriA on DNA. Stimulates the DNA unwinding activity of PriA helicase. This is Replication restart protein PriB from Neisseria meningitidis serogroup B (strain ATCC BAA-335 / MC58).